We begin with the raw amino-acid sequence, 172 residues long: Early nodulin-like protein 17 (172 aa).

Residues 1-26 (MARFTVLITAVVLAFLMAAPMPGVTA) form the signal peptide. Residues 27-127 (KKYTVGENKF…GMKLSVKVEK (101 aa)) enclose the Phytocyanin domain. Residues Asn-42, Asn-73, Asn-88, and Asn-101 are each glycosylated (N-linked (GlcNAc...) asparagine). An intrachain disulfide couples Cys-80 to Cys-115. A lipid anchor (GPI-anchor amidated glycine) is attached at Gly-141. Positions 142–172 (SVSMVTGLAQFMIPVSLFAFPAMWDVISRMW) are cleaved as a propeptide — removed in mature form.

It belongs to the early nodulin-like (ENODL) family.

The protein localises to the cell membrane. In terms of biological role, may act as a carbohydrate transporter. In Arabidopsis thaliana (Mouse-ear cress), this protein is Early nodulin-like protein 17.